A 345-amino-acid chain; its full sequence is Dihydroorotase (345 aa).

2 residues coordinate Zn(2+): His-14 and His-16. Residues 16–18 (HLR) and Asn-42 contribute to the substrate site. Lys-102, His-139, and His-177 together coordinate Zn(2+). Lys-102 is modified (N6-carboxylysine). His-139 is a substrate binding site. A substrate-binding site is contributed by Leu-222. Asp-250 is a Zn(2+) binding site. The active site involves Asp-250. Positions 254 and 266 each coordinate substrate.

It belongs to the metallo-dependent hydrolases superfamily. DHOase family. Class II DHOase subfamily. In terms of assembly, homodimer. It depends on Zn(2+) as a cofactor.

It carries out the reaction (S)-dihydroorotate + H2O = N-carbamoyl-L-aspartate + H(+). It participates in pyrimidine metabolism; UMP biosynthesis via de novo pathway; (S)-dihydroorotate from bicarbonate: step 3/3. In terms of biological role, catalyzes the reversible cyclization of carbamoyl aspartate to dihydroorotate. The polypeptide is Dihydroorotase (Nitrosomonas eutropha (strain DSM 101675 / C91 / Nm57)).